The sequence spans 910 residues: Eukaryotic translation initiation factor 3 subunit C (910 aa).

The interval M1–Q21 is disordered. Over residues S11–I20 the composition is skewed to acidic residues. A phosphoserine mark is found at S34, S165, S176, and S185. Residues F157 to E281 form a disordered region. Over residues D162–D186 the composition is skewed to acidic residues. The segment covering E193–A207 has biased composition (low complexity). The segment covering A209 to N235 has biased composition (acidic residues). Basic and acidic residues predominate over residues M240 to T268. In terms of domain architecture, PCI spans F639–P815. Positions F847–E910 are disordered. Over residues N862–G874 the composition is skewed to low complexity. The segment covering R882–K891 has biased composition (basic residues). Residues D895–E910 show a composition bias toward low complexity.

This sequence belongs to the eIF-3 subunit C family. Component of the eukaryotic translation initiation factor 3 (eIF-3) complex. The eIF-3 complex interacts with pix.

It is found in the cytoplasm. In terms of biological role, component of the eukaryotic translation initiation factor 3 (eIF-3) complex, which is involved in protein synthesis of a specialized repertoire of mRNAs and, together with other initiation factors, stimulates binding of mRNA and methionyl-tRNAi to the 40S ribosome. The eIF-3 complex specifically targets and initiates translation of a subset of mRNAs involved in cell proliferation. This chain is Eukaryotic translation initiation factor 3 subunit C, found in Drosophila sechellia (Fruit fly).